A 307-amino-acid chain; its full sequence is Pseudouridine-5'-phosphate glycosidase (307 aa).

Glu-28 functions as the Proton donor in the catalytic mechanism. Substrate contacts are provided by Lys-89 and Val-109. Asp-141 provides a ligand contact to Mn(2+). Position 143 to 145 (143 to 145 (SAD)) interacts with substrate. Catalysis depends on Lys-162, which acts as the Nucleophile.

The protein belongs to the pseudouridine-5'-phosphate glycosidase family. In terms of assembly, homotrimer. It depends on Mn(2+) as a cofactor.

It catalyses the reaction D-ribose 5-phosphate + uracil = psi-UMP + H2O. In terms of biological role, catalyzes the reversible cleavage of pseudouridine 5'-phosphate (PsiMP) to ribose 5-phosphate and uracil. Functions biologically in the cleavage direction, as part of a pseudouridine degradation pathway. In Alkaliphilus metalliredigens (strain QYMF), this protein is Pseudouridine-5'-phosphate glycosidase.